Here is a 250-residue protein sequence, read N- to C-terminus: Probable 2' cyclic ADP-D-ribose synthase TcpB (250 aa).

The disordered stretch occupies residues 1-46 (MSKEKQAQSKAHKAQQAISSAKSLSTQKSKMSELERATRDGAAIGK). The segment at 1–117 (MSKEKQAQSK…TASATMEAEE (117 aa)) is necessary and sufficient for phosphoinositide binding. Residues 14-23 (AQQAISSAKS) are compositionally biased toward low complexity. A compositionally biased stretch (basic and acidic residues) spans 30–39 (KMSELERATR). The TIR domain occupies 117–250 (EEYDFFISHA…EIAKELHSLI (134 aa)). Residue glutamate 192 is part of the active site.

Homodimer; may also form oligomers. Interacts with host TIRAP. Interacts with host MYD88. Interaction with host MYD88 was not confirmed by another study. Interacts with host TLR4. Abolishes the interaction of host TIRAP with TLR4.

It localises to the secreted. The protein localises to the host cell membrane. The enzyme catalyses NAD(+) + H2O = ADP-D-ribose + nicotinamide + H(+). It carries out the reaction NAD(+) = 2'cADPR + nicotinamide + H(+). Functionally, virulence factor that interferes with host Toll-like receptor 2 (TLR2) and TLR4 signaling, resulting in the reduction of dendritic cell maturation, inhibition of pro-inflammatory cytokine secretion and impaired NF-kappa-B activation in macrophages. Interferes with host TLR4 signaling by abolishing host TLR4-TIRAP interaction (but not host TIRAP-MYD88 interaction) and its downstream signaling. Inhibits host TLR 2 induced NF-kappa-B activation and TNF (tumor necrosis factor) secretion. Binds phosphoinositide (PtdIns) via its N-terminal domain. Has NAD(+) hydrolase (NADase) activity, catalyzes cleavage of NAD(+) into ADP-D-ribose (ADPR) and nicotinamide. Also generates a cyclization variant of cyclic ADPR (cADPR), termed v-cADPR (probably 2'cADPR). The polypeptide is Probable 2' cyclic ADP-D-ribose synthase TcpB (Brucella melitensis biotype 1 (strain ATCC 23456 / CCUG 17765 / NCTC 10094 / 16M)).